The sequence spans 115 residues: Aspartate 1-decarboxylase (115 aa).

S25 serves as the catalytic Schiff-base intermediate with substrate; via pyruvic acid. At S25 the chain carries Pyruvic acid (Ser). A substrate-binding site is contributed by T57. Y58 acts as the Proton donor in catalysis. 72-74 (GAA) provides a ligand contact to substrate.

It belongs to the PanD family. Heterooctamer of four alpha and four beta subunits. Pyruvate serves as cofactor. In terms of processing, is synthesized initially as an inactive proenzyme, which is activated by self-cleavage at a specific serine bond to produce a beta-subunit with a hydroxyl group at its C-terminus and an alpha-subunit with a pyruvoyl group at its N-terminus.

It localises to the cytoplasm. The enzyme catalyses L-aspartate + H(+) = beta-alanine + CO2. It functions in the pathway cofactor biosynthesis; (R)-pantothenate biosynthesis; beta-alanine from L-aspartate: step 1/1. Functionally, catalyzes the pyruvoyl-dependent decarboxylation of aspartate to produce beta-alanine. The protein is Aspartate 1-decarboxylase of Campylobacter fetus subsp. fetus (strain 82-40).